We begin with the raw amino-acid sequence, 96 residues long: Co-chaperonin GroES (96 aa).

It belongs to the GroES chaperonin family. Heptamer of 7 subunits arranged in a ring. Interacts with the chaperonin GroEL.

The protein localises to the cytoplasm. Together with the chaperonin GroEL, plays an essential role in assisting protein folding. The GroEL-GroES system forms a nano-cage that allows encapsulation of the non-native substrate proteins and provides a physical environment optimized to promote and accelerate protein folding. GroES binds to the apical surface of the GroEL ring, thereby capping the opening of the GroEL channel. The chain is Co-chaperonin GroES from Aggregatibacter actinomycetemcomitans (Actinobacillus actinomycetemcomitans).